Here is a 739-residue protein sequence, read N- to C-terminus: Phosphoribosylformylglycinamidine synthase subunit PurL (739 aa).

The active site involves H54. The ATP site is built by Y57 and K96. E98 lines the Mg(2+) pocket. Substrate is bound by residues 99-102 and R121; that span reads SHNH. H100 functions as the Proton acceptor in the catalytic mechanism. D122 lines the Mg(2+) pocket. A substrate-binding site is contributed by Q245. D273 serves as a coordination point for Mg(2+). Residue 317-319 coordinates substrate; it reads ESQ. ATP contacts are provided by D500 and G537. Residue N538 coordinates Mg(2+). Residue S540 coordinates substrate.

It belongs to the FGAMS family. In terms of assembly, monomer. Part of the FGAM synthase complex composed of 1 PurL, 1 PurQ and 2 PurS subunits.

The protein localises to the cytoplasm. It catalyses the reaction N(2)-formyl-N(1)-(5-phospho-beta-D-ribosyl)glycinamide + L-glutamine + ATP + H2O = 2-formamido-N(1)-(5-O-phospho-beta-D-ribosyl)acetamidine + L-glutamate + ADP + phosphate + H(+). It participates in purine metabolism; IMP biosynthesis via de novo pathway; 5-amino-1-(5-phospho-D-ribosyl)imidazole from N(2)-formyl-N(1)-(5-phospho-D-ribosyl)glycinamide: step 1/2. In terms of biological role, part of the phosphoribosylformylglycinamidine synthase complex involved in the purines biosynthetic pathway. Catalyzes the ATP-dependent conversion of formylglycinamide ribonucleotide (FGAR) and glutamine to yield formylglycinamidine ribonucleotide (FGAM) and glutamate. The FGAM synthase complex is composed of three subunits. PurQ produces an ammonia molecule by converting glutamine to glutamate. PurL transfers the ammonia molecule to FGAR to form FGAM in an ATP-dependent manner. PurS interacts with PurQ and PurL and is thought to assist in the transfer of the ammonia molecule from PurQ to PurL. In Bacillus cereus (strain ZK / E33L), this protein is Phosphoribosylformylglycinamidine synthase subunit PurL.